We begin with the raw amino-acid sequence, 194 residues long: Protein GrpE 2 (194 aa).

Basic and acidic residues predominate over residues 1–17 (MNDIDKHKKETQTESKN). The segment at 1-29 (MNDIDKHKKETQTESKNDLNNTTITQNNV) is disordered. A compositionally biased stretch (polar residues) spans 18–29 (DLNNTTITQNNV).

Belongs to the GrpE family. As to quaternary structure, homodimer.

The protein localises to the cytoplasm. In terms of biological role, participates actively in the response to hyperosmotic and heat shock by preventing the aggregation of stress-denatured proteins, in association with DnaK and GrpE. It is the nucleotide exchange factor for DnaK and may function as a thermosensor. Unfolded proteins bind initially to DnaJ; upon interaction with the DnaJ-bound protein, DnaK hydrolyzes its bound ATP, resulting in the formation of a stable complex. GrpE releases ADP from DnaK; ATP binding to DnaK triggers the release of the substrate protein, thus completing the reaction cycle. Several rounds of ATP-dependent interactions between DnaJ, DnaK and GrpE are required for fully efficient folding. The protein is Protein GrpE 2 of Buchnera aphidicola subsp. Baizongia pistaciae (strain Bp).